An 87-amino-acid polypeptide reads, in one-letter code: Small ribosomal subunit protein bS20 (87 aa).

A disordered region spans residues 1–22; the sequence is MANIKSQIKRIGTNKKAQERNK.

Belongs to the bacterial ribosomal protein bS20 family.

Binds directly to 16S ribosomal RNA. This chain is Small ribosomal subunit protein bS20, found in Clavibacter michiganensis subsp. michiganensis (strain NCPPB 382).